We begin with the raw amino-acid sequence, 313 residues long: Ribosomal protein L11 methyltransferase (313 aa).

S-adenosyl-L-methionine contacts are provided by T161, G182, D204, and N247.

Belongs to the methyltransferase superfamily. PrmA family.

Its subcellular location is the cytoplasm. The catalysed reaction is L-lysyl-[protein] + 3 S-adenosyl-L-methionine = N(6),N(6),N(6)-trimethyl-L-lysyl-[protein] + 3 S-adenosyl-L-homocysteine + 3 H(+). Functionally, methylates ribosomal protein L11. The sequence is that of Ribosomal protein L11 methyltransferase from Halalkalibacterium halodurans (strain ATCC BAA-125 / DSM 18197 / FERM 7344 / JCM 9153 / C-125) (Bacillus halodurans).